We begin with the raw amino-acid sequence, 466 residues long: Adenylosuccinate lyase (466 aa).

Substrate is bound by residues 21–22 (RY), 97–99 (NHD), and 130–131 (TS). H180 (proton donor/acceptor) is an active-site residue. Q259 provides a ligand contact to substrate. Catalysis depends on S307, which acts as the Proton donor/acceptor. The substrate site is built by R347, S352, and R356.

Belongs to the lyase 1 family. Adenylosuccinate lyase subfamily. As to quaternary structure, homotetramer. Residues from neighboring subunits contribute catalytic and substrate-binding residues to each active site.

It carries out the reaction N(6)-(1,2-dicarboxyethyl)-AMP = fumarate + AMP. The catalysed reaction is (2S)-2-[5-amino-1-(5-phospho-beta-D-ribosyl)imidazole-4-carboxamido]succinate = 5-amino-1-(5-phospho-beta-D-ribosyl)imidazole-4-carboxamide + fumarate. The protein operates within purine metabolism; AMP biosynthesis via de novo pathway; AMP from IMP: step 2/2. It participates in purine metabolism; IMP biosynthesis via de novo pathway; 5-amino-1-(5-phospho-D-ribosyl)imidazole-4-carboxamide from 5-amino-1-(5-phospho-D-ribosyl)imidazole-4-carboxylate: step 2/2. The protein is Adenylosuccinate lyase (purB) of Dictyostelium discoideum (Social amoeba).